Reading from the N-terminus, the 351-residue chain is Phospho-N-acetylmuramoyl-pentapeptide-transferase (351 aa).

10 consecutive transmembrane segments (helical) span residues 17-37 (TAYA…FIIS), 61-83 (MGIP…FFWI), 88-105 (IYFL…CLGF), 130-150 (ILFS…HVSI), 158-178 (SLKL…LISA), 190-210 (GLAI…AYLT), 230-250 (LVIF…FNAY), 254-274 (IMMG…VALI), 279-299 (ILFA…IIQV), and 328-348 (QVVI…LSTI).

This sequence belongs to the glycosyltransferase 4 family. MraY subfamily. Mg(2+) serves as cofactor.

It is found in the cell inner membrane. The catalysed reaction is UDP-N-acetyl-alpha-D-muramoyl-L-alanyl-gamma-D-glutamyl-meso-2,6-diaminopimeloyl-D-alanyl-D-alanine + di-trans,octa-cis-undecaprenyl phosphate = di-trans,octa-cis-undecaprenyl diphospho-N-acetyl-alpha-D-muramoyl-L-alanyl-D-glutamyl-meso-2,6-diaminopimeloyl-D-alanyl-D-alanine + UMP. The protein operates within cell wall biogenesis; peptidoglycan biosynthesis. Its function is as follows. Catalyzes the initial step of the lipid cycle reactions in the biosynthesis of the cell wall peptidoglycan: transfers peptidoglycan precursor phospho-MurNAc-pentapeptide from UDP-MurNAc-pentapeptide onto the lipid carrier undecaprenyl phosphate, yielding undecaprenyl-pyrophosphoryl-MurNAc-pentapeptide, known as lipid I. In Borrelia recurrentis (strain A1), this protein is Phospho-N-acetylmuramoyl-pentapeptide-transferase.